The following is a 200-amino-acid chain: Blue fluorescence protein (200 aa).

Lumazine-binding repeat units follow at residues 1–111 (MFKG…TGGR) and 112–200 (SLSG…AGNW).

As to quaternary structure, monomer.

Its subcellular location is the cytoplasm. Blue fluorescence protein (BFP) that can bind 6,7-dimethyl-8-ribityllumazine, riboflavin, and 6-methyl-7-oxo-8-ribityllumazine as a bound fluorophore. Has no riboflavin-synthase activity. This is Blue fluorescence protein from Aliivibrio fischeri (Vibrio fischeri).